Reading from the N-terminus, the 122-residue chain is Small ribosomal subunit protein uS13 (122 aa).

The interval 99-122 is disordered; the sequence is RGQRTHTNARTRKGPAKAIAGKKK.

Belongs to the universal ribosomal protein uS13 family. As to quaternary structure, part of the 30S ribosomal subunit. Forms a loose heterodimer with protein S19. Forms two bridges to the 50S subunit in the 70S ribosome.

In terms of biological role, located at the top of the head of the 30S subunit, it contacts several helices of the 16S rRNA. In the 70S ribosome it contacts the 23S rRNA (bridge B1a) and protein L5 of the 50S subunit (bridge B1b), connecting the 2 subunits; these bridges are implicated in subunit movement. Contacts the tRNAs in the A and P-sites. In Rhodopseudomonas palustris (strain BisA53), this protein is Small ribosomal subunit protein uS13.